A 276-amino-acid polypeptide reads, in one-letter code: Light-independent protochlorophyllide reductase iron-sulfur ATP-binding protein (276 aa).

Residues 12 to 17 and Lys-41 contribute to the ATP site; that span reads GIGKST. Ser-16 is a binding site for Mg(2+). [4Fe-4S] cluster is bound by residues Cys-97 and Cys-131. 182–183 is an ATP binding site; the sequence is NR.

It belongs to the NifH/BchL/ChlL family. As to quaternary structure, homodimer. Protochlorophyllide reductase is composed of three subunits; BchL, BchN and BchB. The cofactor is [4Fe-4S] cluster.

The catalysed reaction is chlorophyllide a + oxidized 2[4Fe-4S]-[ferredoxin] + 2 ADP + 2 phosphate = protochlorophyllide a + reduced 2[4Fe-4S]-[ferredoxin] + 2 ATP + 2 H2O. It functions in the pathway porphyrin-containing compound metabolism; bacteriochlorophyll biosynthesis (light-independent). In terms of biological role, component of the dark-operative protochlorophyllide reductase (DPOR) that uses Mg-ATP and reduced ferredoxin to reduce ring D of protochlorophyllide (Pchlide) to form chlorophyllide a (Chlide). This reaction is light-independent. The L component serves as a unique electron donor to the NB-component of the complex, and binds Mg-ATP. The chain is Light-independent protochlorophyllide reductase iron-sulfur ATP-binding protein from Chlorobaculum tepidum (strain ATCC 49652 / DSM 12025 / NBRC 103806 / TLS) (Chlorobium tepidum).